The sequence spans 518 residues: ETHYLENE INSENSITIVE 3-like 2 protein (518 aa).

Residues 37 to 73 (DDLSSDEEMEIEELEKKIWRDKQRLKRLKEMAKNGLG) adopt a coiled-coil conformation. Positions 450–518 (FNHPNDLYRP…GQELPTSWIQ (69 aa)) are disordered. Composition is skewed to polar residues over residues 475 to 484 (PSPSTLNQNL) and 500 to 518 (GTENNLHNQGQELPTSWIQ).

Belongs to the EIN3 family. In terms of assembly, acts as a homodimer to bind the primary ethylene response element.

The protein resides in the nucleus. Its function is as follows. Probable transcription factor acting as a positive regulator in the ethylene response pathway. Could bind the primary ethylene response element present in the ETHYLENE-RESPONSE-FACTOR1 promoter. In Arabidopsis thaliana (Mouse-ear cress), this protein is ETHYLENE INSENSITIVE 3-like 2 protein (EIL2).